Here is a 504-residue protein sequence, read N- to C-terminus: Glycerol kinase (504 aa).

Residue Thr-16 participates in ADP binding. 2 residues coordinate ATP: Thr-16 and Thr-17. Residue Thr-16 participates in sn-glycerol 3-phosphate binding. Residue Arg-20 participates in ADP binding. 4 residues coordinate sn-glycerol 3-phosphate: Arg-86, Glu-87, Tyr-138, and Asp-247. Glycerol contacts are provided by Arg-86, Glu-87, Tyr-138, Asp-247, and Gln-248. 2 residues coordinate ADP: Thr-269 and Gly-316. ATP contacts are provided by Thr-269, Gly-316, Gln-320, and Gly-417. ADP is bound by residues Gly-417 and Asn-421.

This sequence belongs to the FGGY kinase family.

It carries out the reaction glycerol + ATP = sn-glycerol 3-phosphate + ADP + H(+). It functions in the pathway polyol metabolism; glycerol degradation via glycerol kinase pathway; sn-glycerol 3-phosphate from glycerol: step 1/1. Its activity is regulated as follows. Inhibited by fructose 1,6-bisphosphate (FBP). Its function is as follows. Key enzyme in the regulation of glycerol uptake and metabolism. Catalyzes the phosphorylation of glycerol to yield sn-glycerol 3-phosphate. In Trichodesmium erythraeum (strain IMS101), this protein is Glycerol kinase.